Reading from the N-terminus, the 521-residue chain is MDFLTLAGQLNAGVILPEGIVIVTLLTVLVTDLILGRQSLRLTPALAITGLSAAIAVLTLQWNTSQNLAFLGGFNGDNLSIVFRGIVLLSAAVTILLSIRYVEQSGTSLGEFITILLTASLGGMFLSGANELVTIFVSLETLSISSYLLTGYMKRDPRSNEAALKYLLIGAASSAIFLYGVSLLYGLAGGETQLPAIAEKLGEAQPLALLISLIFVIAGIAFKISAVPFHQWTPDVYEGSPTPIVAFLSVGSKAAGFALAIRLLVTAYPALTEQWHFVFTALAILSLVLGNVVALAQTSMKRLLAYSSIAQAGFVMIGLIAGTEAGYSSMVYYLLIYLFMNLGGFACVILFSLRTGTDQISEYAGLYQKDPLVTLGLSLCLLSLGGIPPLAGFFGKLYLFWAGWQAGLYGLVLLALITSVISIYYYIRVIKMMVVKEPQEMSESVRNYPETNWNLPGMQPLRAGLVVCVIATAVAGILSNPLFNLASASVSGSSFLGLAPAAEVVTTTATPVALSEPPAAS.

A run of 14 helical transmembrane segments spans residues 14–34 (VILPEGIVIVTLLTVLVTDLI), 42–62 (LTPALAITGLSAAIAVLTLQW), 79–99 (LSIVFRGIVLLSAAVTILLSI), 109–129 (LGEFITILLTASLGGMFLSGA), 132–152 (LVTIFVSLETLSISSYLLTGY), 167–187 (LLIGAASSAIFLYGVSLLYGL), 207–227 (LALLISLIFVIAGIAFKISAV), 241–261 (PTPIVAFLSVGSKAAGFALAI), 275–295 (WHFVFTALAILSLVLGNVVAL), 303–323 (LLAYSSIAQAGFVMIGLIAGT), 331–351 (VYYLLIYLFMNLGGFACVILF), 375–395 (LGLSLCLLSLGGIPPLAGFFG), 397–417 (LYLFWAGWQAGLYGLVLLALI), and 463–483 (AGLVVCVIATAVAGILSNPLF).

This sequence belongs to the complex I subunit 2 family. In terms of assembly, NDH-1 can be composed of about 15 different subunits; different subcomplexes with different compositions have been identified which probably have different functions.

Its subcellular location is the cellular thylakoid membrane. It catalyses the reaction a plastoquinone + NADH + (n+1) H(+)(in) = a plastoquinol + NAD(+) + n H(+)(out). It carries out the reaction a plastoquinone + NADPH + (n+1) H(+)(in) = a plastoquinol + NADP(+) + n H(+)(out). NDH-1 shuttles electrons from an unknown electron donor, via FMN and iron-sulfur (Fe-S) centers, to quinones in the respiratory and/or the photosynthetic chain. The immediate electron acceptor for the enzyme in this species is believed to be plastoquinone. Couples the redox reaction to proton translocation, and thus conserves the redox energy in a proton gradient. Cyanobacterial NDH-1 also plays a role in inorganic carbon-concentration. The protein is NAD(P)H-quinone oxidoreductase subunit 2 of Synechococcus elongatus (strain ATCC 33912 / PCC 7942 / FACHB-805) (Anacystis nidulans R2).